Here is a 175-residue protein sequence, read N- to C-terminus: Endoribonuclease YbeY (175 aa).

Zn(2+)-binding residues include histidine 129, histidine 133, and histidine 139.

The protein belongs to the endoribonuclease YbeY family. It depends on Zn(2+) as a cofactor.

The protein localises to the cytoplasm. Functionally, single strand-specific metallo-endoribonuclease involved in late-stage 70S ribosome quality control and in maturation of the 3' terminus of the 16S rRNA. In Lactobacillus gasseri (strain ATCC 33323 / DSM 20243 / BCRC 14619 / CIP 102991 / JCM 1131 / KCTC 3163 / NCIMB 11718 / NCTC 13722 / AM63), this protein is Endoribonuclease YbeY.